The following is a 131-amino-acid chain: Fumarate reductase subunit C (131 aa).

3 consecutive transmembrane segments (helical) span residues 30–50, 63–83, and 109–129; these read EGTA…LFAL, FLQN…ALLH, and IIKS…FVAL.

Belongs to the FrdC family. In terms of assembly, part of an enzyme complex containing four subunits: a flavoprotein (FrdA), an iron-sulfur protein (FrdB), and two hydrophobic anchor proteins (FrdC and FrdD).

The protein localises to the cell inner membrane. Two distinct, membrane-bound, FAD-containing enzymes are responsible for the catalysis of fumarate and succinate interconversion; fumarate reductase is used in anaerobic growth, and succinate dehydrogenase is used in aerobic growth. Anchors the catalytic components of the fumarate reductase complex to the cell inner membrane, binds quinones. The polypeptide is Fumarate reductase subunit C (Shigella boydii serotype 4 (strain Sb227)).